The following is a 560-amino-acid chain: Probable methionine--tRNA ligase, cytoplasmic (560 aa).

The 'HIGH' region signature appears at 16–26 (PYVNNQPHLGN). The 'KMSKS' region motif lies at 347 to 351 (KFSKS). Lys350 is an ATP binding site.

Belongs to the class-I aminoacyl-tRNA synthetase family.

It localises to the cytoplasm. The catalysed reaction is tRNA(Met) + L-methionine + ATP = L-methionyl-tRNA(Met) + AMP + diphosphate. The protein is Probable methionine--tRNA ligase, cytoplasmic of Vairimorpha ceranae (strain BRL01) (Microsporidian parasite).